The sequence spans 266 residues: Coiled-coil domain-containing glutamate-rich protein 2 (266 aa).

The first 23 residues, 1-23 (MPPRGPASELLLLRLLLLGAATA), serve as a signal peptide directing secretion. Composition is skewed to basic and acidic residues over residues 90-100 (EAGKMRSSQEV), 154-188 (LWQR…EKGV), 204-213 (GGGERREDLP), and 221-266 (QPEA…RREG). The tract at residues 90-266 (EAGKMRSSQE…TLGEQLRREG (177 aa)) is disordered.

As to expression, expressed at higher levels in fetal brain and skeletal muscle. Lower expression is detected in fetal kidney, liver, spleen, thymus, heart and lung.

It is found in the secreted. The protein is Coiled-coil domain-containing glutamate-rich protein 2 (CCER2) of Homo sapiens (Human).